The sequence spans 404 residues: tRNA (carboxymethyluridine(34)-5-O)-methyltransferase (404 aa).

Phosphoserine is present on Ser238.

In terms of assembly, interacts with TRM112A and TRM112B.

The catalysed reaction is 5-(carboxymethyl)uridine(34) in tRNA + S-adenosyl-L-methionine = 5-(2-methoxy-2-oxoethyl)uridine(34) in tRNA + S-adenosyl-L-homocysteine. Functionally, catalyzes the methylation of 5-carboxymethyl uridine to 5-methylcarboxymethyl uridine at the wobble position of the anticodon loop in tRNA via its methyltransferase domain. Catalyzes the last step in the formation of 5-methylcarboxymethyl uridine at the wobble position of the anticodon loop in target tRNA. In Arabidopsis thaliana (Mouse-ear cress), this protein is tRNA (carboxymethyluridine(34)-5-O)-methyltransferase.